Consider the following 649-residue polypeptide: Exoribonuclease 2 (649 aa).

In terms of domain architecture, RNB spans 190–517; sequence RKDLTDLDFI…NHRLLKSIIK (328 aa). Residues 562-644 form the S1 motif domain; the sequence is NQKFNAEITD…KTRSIIAKPV (83 aa).

This sequence belongs to the RNR ribonuclease family. RNase II subfamily.

It localises to the cytoplasm. The catalysed reaction is Exonucleolytic cleavage in the 3'- to 5'-direction to yield nucleoside 5'-phosphates.. Its function is as follows. Involved in mRNA degradation. Hydrolyzes single-stranded polyribonucleotides processively in the 3' to 5' direction. The protein is Exoribonuclease 2 of Buchnera aphidicola subsp. Acyrthosiphon pisum (strain 5A).